The primary structure comprises 672 residues: DNA polymerase eta (672 aa).

A UmuC domain is found at 14–254 (IAHVDMDCFY…LPIKKMKQLG (241 aa)). Mg(2+) is bound by residues aspartate 18 and methionine 19. Residues aspartate 18 and methionine 19 each contribute to the Mn(2+) site. A 2'-deoxyribonucleoside 5'-triphosphate contacts are provided by tyrosine 23 and arginine 60. Residues aspartate 120 and glutamate 121 each contribute to the Mg(2+) site. Aspartate 120 and glutamate 121 together coordinate Mn(2+). Catalysis depends on glutamate 121, which acts as the Proton acceptor. DNA-binding regions lie at residues 318–325 (KTFPGPRA) and 362–383 (TLHA…PSKS). Disordered regions lie at residues 521–617 (VSCP…TDWG) and 648–672 (QFNT…PLNR). 2 stretches are compositionally biased toward polar residues: residues 523–544 (CPSN…TQTK) and 570–586 (YNAT…DSTV). 2 stretches are compositionally biased toward low complexity: residues 587 to 602 (SSAS…SHNS) and 651 to 662 (TGKSKGDGSTSS).

This sequence belongs to the DNA polymerase type-Y family. As to quaternary structure, interacts with PCNA1 and PCNA2. The interaction with PCNA2 is required for translesion synthesis (TLS) to repair UV photoproducts. Mg(2+) is required as a cofactor. Mn(2+) serves as cofactor. As to expression, constitutively expressed in roots, stems, leaves, flowers and siliques.

It is found in the nucleus. The enzyme catalyses DNA(n) + a 2'-deoxyribonucleoside 5'-triphosphate = DNA(n+1) + diphosphate. The enzyme in complex with the DNA substrate binds a third divalent metal cation. The binding of this third divalent cation, which is coordinated by water molecules and two oxygen atoms from DNA and dNTP, is essential for catalyzing the DNA synthesis. Functionally, error-free DNA polymerase specifically involved in DNA repair. Plays an important role in translesion synthesis (TLS), where the normal high fidelity DNA polymerases cannot proceed and DNA synthesis stalls. Plays an important role in the repair of UV-induced pyrimidine dimers and confers resistance to ultraviolet light. Depending on the context, it inserts the correct base, but may cause base transitions and transversions. Forms a Schiff base with 5'-deoxyribose phosphate at abasic sites, but does not have lyase activity. Targets POLI to replication foci. Exhibits cyclobutane dimer nonmutagenic bypass activity in vitro. The chain is DNA polymerase eta (POLH) from Arabidopsis thaliana (Mouse-ear cress).